Reading from the N-terminus, the 172-residue chain is Translation initiation factor IF-3 (172 aa).

The protein belongs to the IF-3 family. Monomer.

It is found in the cytoplasm. In terms of biological role, IF-3 binds to the 30S ribosomal subunit and shifts the equilibrium between 70S ribosomes and their 50S and 30S subunits in favor of the free subunits, thus enhancing the availability of 30S subunits on which protein synthesis initiation begins. This is Translation initiation factor IF-3 from Geobacter sulfurreducens (strain ATCC 51573 / DSM 12127 / PCA).